Consider the following 434-residue polypeptide: Adenylosuccinate synthetase (434 aa).

GTP contacts are provided by residues 11–17 and 39–41; these read GDEGKGK and GHT. Residue Asp12 is the Proton acceptor of the active site. Residues Asp12 and Gly39 each coordinate Mg(2+). Residues 12–15, 37–40, Thr134, Arg148, Asn230, Thr245, and Arg309 contribute to the IMP site; these read DEGK and NAGH. His40 acts as the Proton donor in catalysis. A substrate-binding site is contributed by 305–311; the sequence is VTTGRKR. Residues Arg311, 337–339, and 419–421 contribute to the GTP site; these read KLD and GTG.

It belongs to the adenylosuccinate synthetase family. As to quaternary structure, homodimer. Mg(2+) is required as a cofactor.

It is found in the cytoplasm. The catalysed reaction is IMP + L-aspartate + GTP = N(6)-(1,2-dicarboxyethyl)-AMP + GDP + phosphate + 2 H(+). The protein operates within purine metabolism; AMP biosynthesis via de novo pathway; AMP from IMP: step 1/2. Functionally, plays an important role in the de novo pathway and in the salvage pathway of purine nucleotide biosynthesis. Catalyzes the first committed step in the biosynthesis of AMP from IMP. The sequence is that of Adenylosuccinate synthetase from Lachancea thermotolerans (strain ATCC 56472 / CBS 6340 / NRRL Y-8284) (Yeast).